The following is a 454-amino-acid chain: Bifunctional protein GlmU (454 aa).

Residues 1–226 are pyrophosphorylase; the sequence is MSLNVVILAA…PIETEGANNR (226 aa). UDP-N-acetyl-alpha-D-glucosamine is bound by residues 8–11, Lys22, Gln73, 78–79, 100–102, Gly137, Glu151, Asn166, and Asn224; these read LAAG, GT, and YGD. Asp102 serves as a coordination point for Mg(2+). Position 224 (Asn224) interacts with Mg(2+). Residues 227-247 form a linker region; it reads VQLAALERAYQARRAEELMLA. Residues 248-454 form an N-acetyltransferase region; it reads GANLRDPARI…GWQRPVKKPK (207 aa). UDP-N-acetyl-alpha-D-glucosamine-binding residues include Arg330 and Lys348. His360 serves as the catalytic Proton acceptor. 2 residues coordinate UDP-N-acetyl-alpha-D-glucosamine: Tyr363 and Asn374. Residues Ala377, 383–384, Ser402, Ala420, and Arg437 each bind acetyl-CoA; that span reads NY.

The protein in the N-terminal section; belongs to the N-acetylglucosamine-1-phosphate uridyltransferase family. This sequence in the C-terminal section; belongs to the transferase hexapeptide repeat family. Homotrimer. Requires Mg(2+) as cofactor.

It localises to the cytoplasm. It catalyses the reaction alpha-D-glucosamine 1-phosphate + acetyl-CoA = N-acetyl-alpha-D-glucosamine 1-phosphate + CoA + H(+). The enzyme catalyses N-acetyl-alpha-D-glucosamine 1-phosphate + UTP + H(+) = UDP-N-acetyl-alpha-D-glucosamine + diphosphate. It participates in nucleotide-sugar biosynthesis; UDP-N-acetyl-alpha-D-glucosamine biosynthesis; N-acetyl-alpha-D-glucosamine 1-phosphate from alpha-D-glucosamine 6-phosphate (route II): step 2/2. The protein operates within nucleotide-sugar biosynthesis; UDP-N-acetyl-alpha-D-glucosamine biosynthesis; UDP-N-acetyl-alpha-D-glucosamine from N-acetyl-alpha-D-glucosamine 1-phosphate: step 1/1. Its pathway is bacterial outer membrane biogenesis; LPS lipid A biosynthesis. Its function is as follows. Catalyzes the last two sequential reactions in the de novo biosynthetic pathway for UDP-N-acetylglucosamine (UDP-GlcNAc). The C-terminal domain catalyzes the transfer of acetyl group from acetyl coenzyme A to glucosamine-1-phosphate (GlcN-1-P) to produce N-acetylglucosamine-1-phosphate (GlcNAc-1-P), which is converted into UDP-GlcNAc by the transfer of uridine 5-monophosphate (from uridine 5-triphosphate), a reaction catalyzed by the N-terminal domain. The protein is Bifunctional protein GlmU of Shewanella amazonensis (strain ATCC BAA-1098 / SB2B).